We begin with the raw amino-acid sequence, 186 residues long: Adrenodoxin, mitochondrial (186 aa).

The transit peptide at M1–W58 directs the protein to the mitochondrion. S61 is modified (phosphoserine). The residue at position 64 (K64) is an N6-acetyllysine; alternate. K64 carries the post-translational modification N6-succinyllysine; alternate. The 105-residue stretch at I65 to V169 folds into the 2Fe-2S ferredoxin-type domain. [2Fe-2S] cluster contacts are provided by C104, C110, C113, and C150. K156 carries the post-translational modification N6-succinyllysine. S175 is modified (phosphoserine).

Belongs to the adrenodoxin/putidaredoxin family. As to quaternary structure, interacts with CYP11A1. The cofactor is [2Fe-2S] cluster.

The protein localises to the mitochondrion matrix. In terms of biological role, essential for the synthesis of various steroid hormones. Participates in the reduction of mitochondrial cytochrome P450 for steroidogenesis. Transfers electrons from adrenodoxin reductase to CYP11A1, a cytochrome P450 that catalyzes cholesterol side-chain cleavage. Does not form a ternary complex with adrenodoxin reductase and CYP11A1 but shuttles between the two enzymes to transfer electrons. The protein is Adrenodoxin, mitochondrial (FDX1) of Sus scrofa (Pig).